The chain runs to 235 residues: Ribosomal RNA small subunit methyltransferase G (235 aa).

Residues glycine 98, methionine 103, 149-150, and arginine 164 contribute to the S-adenosyl-L-methionine site; that span reads VE.

This sequence belongs to the methyltransferase superfamily. RNA methyltransferase RsmG family.

It is found in the cytoplasm. The catalysed reaction is guanosine(527) in 16S rRNA + S-adenosyl-L-methionine = N(7)-methylguanosine(527) in 16S rRNA + S-adenosyl-L-homocysteine. In terms of biological role, specifically methylates the N7 position of guanine in position 527 of 16S rRNA. In Cupriavidus pinatubonensis (strain JMP 134 / LMG 1197) (Cupriavidus necator (strain JMP 134)), this protein is Ribosomal RNA small subunit methyltransferase G.